A 308-amino-acid polypeptide reads, in one-letter code: NAD-dependent protein deacylase SIR4 (308 aa).

The transit peptide at 1-16 (MAATKLHPALRNAIRA) directs the protein to the mitochondrion. A Deacetylase sirtuin-type domain is found at 28-308 (TFDVQEGIKL…EVLPAALRQL (281 aa)). NAD(+)-binding positions include 53–73 (GAGI…RPPH) and 129–132 (QNVD). The Proton acceptor role is filled by His147. Cys155, Cys158, Cys211, and Cys214 together coordinate Zn(2+). Residues 251-253 (GTS), 277-279 (NSG), and Ile297 contribute to the NAD(+) site.

Belongs to the sirtuin family. Class II subfamily. Zn(2+) serves as cofactor.

Its subcellular location is the mitochondrion matrix. It catalyses the reaction N(6)-acetyl-L-lysyl-[protein] + NAD(+) + H2O = 2''-O-acetyl-ADP-D-ribose + nicotinamide + L-lysyl-[protein]. NAD-dependent protein deacylase. Catalyzes the NAD-dependent hydrolysis of acyl groups from lysine residues. This is NAD-dependent protein deacylase SIR4 from Monosiga brevicollis (Choanoflagellate).